The following is a 353-amino-acid chain: Melanin-concentrating hormone receptor 1 (353 aa).

Over 1–45 (MDLQASLLSTGPNASNISDGQDNFTLAGPPPRTRSVSYINIIMPS) the chain is Extracellular. N-linked (GlcNAc...) asparagine glycans are attached at residues asparagine 13, asparagine 16, and asparagine 23. The chain crosses the membrane as a helical span at residues 46-66 (VFGTICLLGIVGNSTVIFAVV). At 67 to 79 (KKSKLHWCSNVPD) the chain is on the cytoplasmic side. The helical transmembrane segment at 80-100 (IFIINLSVVDLLFLLGMPFMI) threads the bilayer. Topologically, residues 101-116 (HQLMGNGVWHFGETMC) are extracellular. Cysteine 116 and cysteine 194 are oxidised to a cystine. Residues 117–139 (TLITAMDANSQFTSTYILTAMAI) form a helical membrane-spanning segment. Over 140 to 161 (DRYLATVHPISSTKFRKPSMAT) the chain is Cytoplasmic. A helical transmembrane segment spans residues 162-182 (LVICLLWALSFISITPVWLYA). The Extracellular segment spans residues 183-204 (RLIPFPGGAVGCGIRLPNPDTD). The helical transmembrane segment at 205–225 (LYWFTLYQFFLAFALPFVVIT) threads the bilayer. The Cytoplasmic segment spans residues 226–256 (AAYVKILQRMTSSVAPASQRSIRLRTKRVTR). The chain crosses the membrane as a helical span at residues 257–277 (TAIAICLVFFVCWAPYYVLQL). Residues 278–294 (TQLSISRPTLTFVYLYN) lie on the Extracellular side of the membrane. Residues 295–315 (AAISLGYANSCLNPFVYIVLC) form a helical membrane-spanning segment. The Cytoplasmic portion of the chain corresponds to 316-353 (ETFRKRLVLSVKPAAQGQLRTVSNAQTADEERTESKGT).

The protein belongs to the G-protein coupled receptor 1 family. Interacts with NCDN. As to expression, expressed predominantly in the brain. Expression in brain is negatively regulated by leptin. Also found in the epithelium of the tongue and kidney.

The protein localises to the cell membrane. Its function is as follows. Receptor for melanin-concentrating hormone, coupled to both G proteins that inhibit adenylyl cyclase and G proteins that activate phosphoinositide hydrolysis. The polypeptide is Melanin-concentrating hormone receptor 1 (Mus musculus (Mouse)).